The following is a 351-amino-acid chain: Ribonucleoside-diphosphate reductase subunit beta (351 aa).

Fe cation contacts are provided by Asp94, Glu124, and His127. Residue Tyr131 is part of the active site. Residues Glu191, Glu225, and His228 each contribute to the Fe cation site.

This sequence belongs to the ribonucleoside diphosphate reductase small chain family. Tetramer of two alpha and two beta subunits. Requires Fe cation as cofactor.

It catalyses the reaction a 2'-deoxyribonucleoside 5'-diphosphate + [thioredoxin]-disulfide + H2O = a ribonucleoside 5'-diphosphate + [thioredoxin]-dithiol. Provides the precursors necessary for DNA synthesis. Catalyzes the biosynthesis of deoxyribonucleotides from the corresponding ribonucleotides. The protein is Ribonucleoside-diphosphate reductase subunit beta (nrdB) of Treponema pallidum (strain Nichols).